The following is a 172-amino-acid chain: Lipoprotein signal peptidase (172 aa).

4 consecutive transmembrane segments (helical) span residues 4 to 24 (LSSSAITTTWLAMIIIVLDQV), 39 to 59 (VAILPHLNLTLVYNYGAAFSF), 69 to 89 (WFFTALALVVGTALVIWLAKL), and 93 to 113 (WTLEVVAINLVLSGAIGNVID). Catalysis depends on residues Asp122 and Asp140. Residues 136 to 156 (FNVADMGISIGAVLLIISEFW) traverse the membrane as a helical segment.

The protein belongs to the peptidase A8 family.

The protein localises to the cell inner membrane. The catalysed reaction is Release of signal peptides from bacterial membrane prolipoproteins. Hydrolyzes -Xaa-Yaa-Zaa-|-(S,diacylglyceryl)Cys-, in which Xaa is hydrophobic (preferably Leu), and Yaa (Ala or Ser) and Zaa (Gly or Ala) have small, neutral side chains.. It participates in protein modification; lipoprotein biosynthesis (signal peptide cleavage). In terms of biological role, this protein specifically catalyzes the removal of signal peptides from prolipoproteins. The sequence is that of Lipoprotein signal peptidase from Hydrogenovibrio crunogenus (strain DSM 25203 / XCL-2) (Thiomicrospira crunogena).